The chain runs to 356 residues: Histidinol-phosphate aminotransferase 1 (356 aa).

Lys213 bears the N6-(pyridoxal phosphate)lysine mark.

The protein belongs to the class-II pyridoxal-phosphate-dependent aminotransferase family. Histidinol-phosphate aminotransferase subfamily. In terms of assembly, homodimer. The cofactor is pyridoxal 5'-phosphate.

It catalyses the reaction L-histidinol phosphate + 2-oxoglutarate = 3-(imidazol-4-yl)-2-oxopropyl phosphate + L-glutamate. The protein operates within amino-acid biosynthesis; L-histidine biosynthesis; L-histidine from 5-phospho-alpha-D-ribose 1-diphosphate: step 7/9. The protein is Histidinol-phosphate aminotransferase 1 (hisC1) of Bordetella parapertussis (strain 12822 / ATCC BAA-587 / NCTC 13253).